The chain runs to 283 residues: NAD kinase (283 aa).

Catalysis depends on Asp-66, which acts as the Proton acceptor. NAD(+) contacts are provided by residues 66–67 (DG), Arg-71, 137–138 (ND), His-165, Asp-167, and 178–183 (TGYSMS).

Belongs to the NAD kinase family. Requires a divalent metal cation as cofactor.

It is found in the cytoplasm. It carries out the reaction NAD(+) + ATP = ADP + NADP(+) + H(+). Functionally, involved in the regulation of the intracellular balance of NAD and NADP, and is a key enzyme in the biosynthesis of NADP. Catalyzes specifically the phosphorylation on 2'-hydroxyl of the adenosine moiety of NAD to yield NADP. The chain is NAD kinase from Agathobacter rectalis (strain ATCC 33656 / DSM 3377 / JCM 17463 / KCTC 5835 / VPI 0990) (Eubacterium rectale).